A 464-amino-acid polypeptide reads, in one-letter code: Tyrosine--tRNA ligase, mitochondrial (464 aa).

Tyr61 is a binding site for L-tyrosine. An ATP-binding site is contributed by Asp65. A 'HIGH' region motif is present at residues 66 to 75 (PTADSLHVGN). L-tyrosine-binding residues include Asp105, Tyr209, Gln213, Asp216, and Gln235. A 'KMSKS' region motif is present at residues 270–274 (KFGKS). Residue Lys273 participates in ATP binding.

The protein belongs to the class-I aminoacyl-tRNA synthetase family. As to quaternary structure, homodimer.

It localises to the mitochondrion matrix. The enzyme catalyses tRNA(Tyr) + L-tyrosine + ATP = L-tyrosyl-tRNA(Tyr) + AMP + diphosphate + H(+). In terms of biological role, catalyzes the attachment of tyrosine to tRNA(Tyr) in a two-step reaction: tyrosine is first activated by ATP to form Tyr-AMP and then transferred to the acceptor end of tRNA(Tyr). This is Tyrosine--tRNA ligase, mitochondrial from Drosophila melanogaster (Fruit fly).